Reading from the N-terminus, the 517-residue chain is Glycerol kinase 5 (517 aa).

Residues S23 and T24 each coordinate ATP. R93, D270, and Q271 together coordinate glycerol. The ATP site is built by T292, G335, and G432.

Belongs to the FGGY kinase family.

It is found in the cytoplasm. The catalysed reaction is glycerol + ATP = sn-glycerol 3-phosphate + ADP + H(+). Its pathway is polyol metabolism; glycerol degradation via glycerol kinase pathway; sn-glycerol 3-phosphate from glycerol: step 1/1. Its function is as follows. Skin-specific kinase that plays a key role in glycerol metabolism, catalyzing its phosphorylation to produce sn-glycerol 3-phosphate. Involved in skin-specific regulation of sterol regulatory element-binding protein (SREBP) processing and lipid biosynthesis. The sequence is that of Glycerol kinase 5 (GK5) from Gallus gallus (Chicken).